The primary structure comprises 300 residues: Ribonuclease HIII (300 aa).

Residues 86–300 (RPRLGVDESG…FNEICDSASA (215 aa)) form the RNase H type-2 domain. A divalent metal cation is bound by residues aspartate 92, glutamate 93, and aspartate 196.

The protein belongs to the RNase HII family. RnhC subfamily. It depends on Mn(2+) as a cofactor. Mg(2+) is required as a cofactor.

Its subcellular location is the cytoplasm. The catalysed reaction is Endonucleolytic cleavage to 5'-phosphomonoester.. In terms of biological role, endonuclease that specifically degrades the RNA of RNA-DNA hybrids. This is Ribonuclease HIII from Chlamydia felis (strain Fe/C-56) (Chlamydophila felis).